The primary structure comprises 398 residues: Putative molybdopterin biosynthesis protein MJ0666 (398 aa).

This sequence belongs to the MoeA family.

It functions in the pathway cofactor biosynthesis; molybdopterin biosynthesis. This Methanocaldococcus jannaschii (strain ATCC 43067 / DSM 2661 / JAL-1 / JCM 10045 / NBRC 100440) (Methanococcus jannaschii) protein is Putative molybdopterin biosynthesis protein MJ0666.